An 848-amino-acid chain; its full sequence is Aryl hydrocarbon receptor (848 aa).

M1 is modified (N-acetylmethionine). Residues 1 to 10 (MNSSSANITY) constitute a propeptide that is removed on maturation. The span at 1 to 10 (MNSSSANITY) shows a compositional bias: polar residues. The segment at 1-39 (MNSSSANITYASRKRRKPVQKTVKPIPAEGIKSNPSKRH) is disordered. 2 short sequence motifs (nuclear localization signal) span residues 13 to 16 (RKRR) and 37 to 42 (KRHRDR). In terms of domain architecture, bHLH spans 27 to 80 (PAEGIKSNPSKRHRDRLNTELDRLASLLPFPQDVINKLDKLSVLRLSVSYLRAK). The interval 38–66 (RHRDRLNTELDRLASLLPFPQDVINKLDK) is DNA-binding. 3 required for maintaining the overall integrity of the AHR:ARNT heterodimer and its transcriptional activity regions span residues 50–82 (LASL…AKSF), 118–126 (LLQALNGFV), and 266–268 (FAI). The Nuclear export signal motif lies at 64 to 72 (LDKLSVLRL). One can recognise a PAS 1 domain in the interval 111–181 (NLQEGEFLLQ…RQLHWALNPS (71 aa)). The PAS 2 domain occupies 275-342 (PSILEIRTKN…CAESHIRMIK (68 aa)). A PAC domain is found at 348 to 386 (MIVFRLLTKNNRWTWVQSNARLLYKNGRPDYIIVTQRPL). The tract at residues 824 to 848 (TTHLQPLHHPSEARPFPDLTSSGFL) is disordered.

In terms of assembly, homodimer. Heterodimer; efficient DNA binding requires dimerization with another bHLH protein. Interacts with ARNT; the heterodimer ARNT:AHR binds to core DNA sequence 5'-TGCGTG-3' within the dioxin response element (DRE) of target gene promoters and activates their transcription. Binds MYBBP1A. Interacts with coactivators including SRC-1, RIP140 and NOCA7, and with the corepressor SMRT. Interacts with NEDD8 and IVNS1ABP. Interacts with BMAL1. Interacts with HSP90AB1. Interacts with TIPARP; leading to mono-ADP-ribosylation of AHR and subsequent inhibition of AHR. Post-translationally, mono-ADP-ribosylated, leading to inhibit transcription activator activity of AHR. Expressed in all tissues tested including blood, brain, heart, kidney, liver, lung, pancreas and skeletal muscle. Expressed in retinal photoreceptors.

Its subcellular location is the cytoplasm. The protein localises to the nucleus. Its function is as follows. Ligand-activated transcription factor that enables cells to adapt to changing conditions by sensing compounds from the environment, diet, microbiome and cellular metabolism, and which plays important roles in development, immunity and cancer. Upon ligand binding, translocates into the nucleus, where it heterodimerizes with ARNT and induces transcription by binding to xenobiotic response elements (XRE). Regulates a variety of biological processes, including angiogenesis, hematopoiesis, drug and lipid metabolism, cell motility and immune modulation. Xenobiotics can act as ligands: upon xenobiotic-binding, activates the expression of multiple phase I and II xenobiotic chemical metabolizing enzyme genes (such as the CYP1A1 gene). Mediates biochemical and toxic effects of halogenated aromatic hydrocarbons. Next to xenobiotics, natural ligands derived from plants, microbiota, and endogenous metabolism are potent AHR agonists. Tryptophan (Trp) derivatives constitute an important class of endogenous AHR ligands. Acts as a negative regulator of anti-tumor immunity: indoles and kynurenic acid generated by Trp catabolism act as ligand and activate AHR, thereby promoting AHR-driven cancer cell motility and suppressing adaptive immunity. Regulates the circadian clock by inhibiting the basal and circadian expression of the core circadian component PER1. Inhibits PER1 by repressing the CLOCK-BMAL1 heterodimer mediated transcriptional activation of PER1. The heterodimer ARNT:AHR binds to core DNA sequence 5'-TGCGTG-3' within the dioxin response element (DRE) of target gene promoters and activates their transcription. The protein is Aryl hydrocarbon receptor of Homo sapiens (Human).